Here is a 266-residue protein sequence, read N- to C-terminus: GTP cyclohydrolase III (266 aa).

The protein belongs to the archaeal-type GTP cyclohydrolase family.

The catalysed reaction is GTP + 3 H2O = 2-amino-5-formylamino-6-(5-phospho-D-ribosylamino)pyrimidin-4(3H)-one + 2 phosphate + 2 H(+). Its function is as follows. Catalyzes the formation of 2-amino-5-formylamino-6-ribofuranosylamino-4(3H)-pyrimidinone ribonucleotide monophosphate and inorganic phosphate from GTP. Also has an independent pyrophosphate phosphohydrolase activity. The protein is GTP cyclohydrolase III of Methanococcus maripaludis (strain C5 / ATCC BAA-1333).